The sequence spans 159 residues: Dihydrofolate reductase (159 aa).

The DHFR domain occupies 1–158 (MISLIAALAV…HSYCFEILER (158 aa)). Isoleucine 5 lines the substrate pocket. NADP(+) is bound by residues alanine 7 and 13 to 19 (VIGMENA). Aspartate 27 is a binding site for substrate. 45 to 46 (LT) contacts NADP(+). 2 residues coordinate substrate: arginine 52 and arginine 57. NADP(+)-binding positions include 63–64 (SS), lysine 76, and 95–102 (GGGRVYEQ). Threonine 113 provides a ligand contact to substrate.

The protein belongs to the dihydrofolate reductase family.

The enzyme catalyses (6S)-5,6,7,8-tetrahydrofolate + NADP(+) = 7,8-dihydrofolate + NADPH + H(+). The protein operates within cofactor biosynthesis; tetrahydrofolate biosynthesis; 5,6,7,8-tetrahydrofolate from 7,8-dihydrofolate: step 1/1. Its function is as follows. Key enzyme in folate metabolism. Catalyzes an essential reaction for de novo glycine and purine synthesis, and for DNA precursor synthesis. The polypeptide is Dihydrofolate reductase (folA) (Klebsiella aerogenes (Enterobacter aerogenes)).